The primary structure comprises 156 residues: RNA pyrophosphohydrolase (156 aa).

Residues 6–148 (NYRPNVAAIV…KKNIYVKVIK (143 aa)) enclose the Nudix hydrolase domain. Residues 43–64 (GGIDKGESVKNALFRELKEEIG) carry the Nudix box motif.

Belongs to the Nudix hydrolase family. RppH subfamily. It depends on a divalent metal cation as a cofactor.

In terms of biological role, accelerates the degradation of transcripts by removing pyrophosphate from the 5'-end of triphosphorylated RNA, leading to a more labile monophosphorylated state that can stimulate subsequent ribonuclease cleavage. The chain is RNA pyrophosphohydrolase from Campylobacter jejuni subsp. jejuni serotype O:6 (strain 81116 / NCTC 11828).